Here is a 153-residue protein sequence, read N- to C-terminus: Arachidonate 5-lipoxygenase-activating protein (153 aa).

Over 1 to 8 (MDQEAVGN) the chain is Lumenal. The chain crosses the membrane as a helical span at residues 9–30 (VVLLAIVTLISVVQNGFFAHKV). Topologically, residues 31–52 (EHESRNQNGRSFQRTGTLAFER) are cytoplasmic. A helical membrane pass occupies residues 53 to 77 (VYTANQNCVDAYPTFLAVLWTAGLL). Over 78 to 80 (CSQ) the chain is Lumenal. The chain crosses the membrane as a helical span at residues 81-102 (VPAAFAGLMYLFVRQKYFVGYL). Residues 103–107 (GERTQ) are Cytoplasmic-facing. Residues 108–115 (STPGYIFG) lie within the membrane without spanning it. Residues 116–128 (KRIILFLFLMSLA) traverse the membrane as a helical segment. The Lumenal segment spans residues 129-153 (GILNYCLILLFGSDFENYIKTISTT).

This sequence belongs to the MAPEG family. In terms of assembly, homotrimer. Interacts with LTC4S and ALOX5.

It localises to the nucleus membrane. The protein resides in the endoplasmic reticulum membrane. In terms of biological role, required for leukotriene biosynthesis by ALOX5 (5-lipoxygenase). Anchors ALOX5 to the membrane. Binds arachidonic acid, and could play an essential role in the transfer of arachidonic acid to ALOX5. Binds to MK-886, a compound that blocks the biosynthesis of leukotrienes. The polypeptide is Arachidonate 5-lipoxygenase-activating protein (ALOX5AP) (Oryctolagus cuniculus (Rabbit)).